The chain runs to 130 residues: Large ribosomal subunit protein bL19c (130 aa).

Belongs to the bacterial ribosomal protein bL19 family.

It localises to the plastid. The protein resides in the chloroplast. This Chlorella vulgaris (Green alga) protein is Large ribosomal subunit protein bL19c (rpl19).